The chain runs to 342 residues: MLKFIQNNREITALLAVVLLFVLPGFLDRQYLSVQTLTMVYSSAQILILLAMGATLVMLTRNIDVSVGSITGMCAVLLGMLLNAGYSLPVACVATLLLGLLAGFFNGVLVAWLKIPAIVATLGTLGLYRGIMLLWTGGKWIEGLPAELKQLSAPLLLGVSAIGWLTIILVAFMAWLLAKTAFGRSFYATGDNLQGARQLGVRTEAIRIVAFSLNGCMAALAGIVFASQIGFIPNQTGTGLEMKAIAACVLGGISLLGGSGAIIGAVLGAWFLTQIDSVLVLLRIPAWWNDFIAGLVLLAVLVFDGRLRCALERNLRRQKYARFMTPPPSVKPASSGKKREAA.

The Periplasmic portion of the chain corresponds to 1–13; the sequence is MLKFIQNNREITA. A helical transmembrane segment spans residues 14–34; it reads LLAVVLLFVLPGFLDRQYLSV. At 35-38 the chain is on the cytoplasmic side; it reads QTLT. The helical transmembrane segment at 39–59 threads the bilayer; the sequence is MVYSSAQILILLAMGATLVML. Over 60–69 the chain is Periplasmic; that stretch reads TRNIDVSVGS. Residues 70-90 traverse the membrane as a helical segment; it reads ITGMCAVLLGMLLNAGYSLPV. Over 91-92 the chain is Cytoplasmic; that stretch reads AC. Residues 93 to 113 form a helical membrane-spanning segment; that stretch reads VATLLLGLLAGFFNGVLVAWL. A topological domain (periplasmic) is located at residue Lys114. The helical transmembrane segment at 115-135 threads the bilayer; it reads IPAIVATLGTLGLYRGIMLLW. The Cytoplasmic segment spans residues 136-154; it reads TGGKWIEGLPAELKQLSAP. Residues 155–175 traverse the membrane as a helical segment; the sequence is LLLGVSAIGWLTIILVAFMAW. The Periplasmic portion of the chain corresponds to 176 to 212; that stretch reads LLAKTAFGRSFYATGDNLQGARQLGVRTEAIRIVAFS. The chain crosses the membrane as a helical span at residues 213 to 233; it reads LNGCMAALAGIVFASQIGFIP. At 234-251 the chain is on the cytoplasmic side; that stretch reads NQTGTGLEMKAIAACVLG. The helical transmembrane segment at 252 to 272 threads the bilayer; sequence GISLLGGSGAIIGAVLGAWFL. Over 273-283 the chain is Periplasmic; that stretch reads TQIDSVLVLLR. Residues 284–304 traverse the membrane as a helical segment; it reads IPAWWNDFIAGLVLLAVLVFD. At 305–342 the chain is on the cytoplasmic side; sequence GRLRCALERNLRRQKYARFMTPPPSVKPASSGKKREAA.

This sequence belongs to the binding-protein-dependent transport system permease family. AraH/RbsC subfamily. In terms of assembly, the complex is composed of two ATP-binding proteins (LsrA), two transmembrane proteins (LsrC and LsrD) and a solute-binding protein (LsrB).

The protein resides in the cell inner membrane. Functionally, part of the ABC transporter complex LsrABCD involved in autoinducer 2 (AI-2) import. Probably responsible for the translocation of the substrate across the membrane. In Escherichia coli (strain K12 / DH10B), this protein is Autoinducer 2 import system permease protein LsrC (lsrC).